The chain runs to 514 residues: Thymus-specific serine protease (514 aa).

Positions 1-24 (MAVWLAQWLGPLLLVSLWGLLAPA) are cleaved as a signal peptide. N-linked (GlcNAc...) asparagine glycosylation is found at N70 and N172. S185 serves as the catalytic Charge relay system. An N-linked (GlcNAc...) asparagine glycan is attached at N321. Active-site charge relay system residues include D447 and H472.

Belongs to the peptidase S28 family. Expressed predominantly in cortical thymic epithelial cells.

Its subcellular location is the cytoplasmic vesicle. In terms of biological role, protease that may play a role in T-cell development. The chain is Thymus-specific serine protease (PRSS16) from Homo sapiens (Human).